A 303-amino-acid chain; its full sequence is MRLFNWRRQAVLNAMPLVKPDQVRTPWHEFWRRFRRQHMAMTAALFVILLIVVAIFARWIAPYDAENYFDYDNLNNGPSLQHWFGVDSLGRDIFSRVLVGAQISLAAGVFAVFIGAAIGTLLGLLAGYYEGWWDRLIMRICDVLFAFPGILLAIAVVAVLGSGIANVIIAVAIFSIPAFARLVRGNTLVLKQQTFIESARSIGASDMTVLLRHILPGTVSSIVVFFTMRIGTSIISAASLSFLGLGAQPPTPEWGAMLDEARADMVIAPHVAVFPVLAIFLTVLAFNLLGDGLRDALDPKIKG.

6 helical membrane passes run 40 to 60 (AMTAALFVILLIVVAIFARWI), 105 to 125 (LAAGVFAVFIGAAIGTLLGLL), 144 to 164 (LFAFPGILLAIAVVAVLGSGI), 165 to 185 (ANVIIAVAIFSIPAFARLVRG), 222 to 242 (IVVFFTMRIGTSIISAASLSF), and 266 to 286 (VIAPHVAVFPVLAIFLTVLAF). The ABC transmembrane type-1 domain occupies 101–290 (AQISLAAGVF…LTVLAFNLLG (190 aa)).

The protein belongs to the binding-protein-dependent transport system permease family. The complex is composed of two ATP-binding proteins (GsiA), two transmembrane proteins (GsiC and GsiD) and a solute-binding protein (GsiB).

The protein localises to the cell inner membrane. Functionally, part of the ABC transporter complex GsiABCD involved in glutathione import. Probably responsible for the translocation of the substrate across the membrane. This is Glutathione transport system permease protein GsiD from Shigella dysenteriae serotype 1 (strain Sd197).